The sequence spans 545 residues: Chaperonin GroEL (545 aa).

ATP-binding positions include 30–33, Lys-51, 87–91, Gly-415, and Asp-495; these read TLGP and DGTTT.

The protein belongs to the chaperonin (HSP60) family. In terms of assembly, forms a cylinder of 14 subunits composed of two heptameric rings stacked back-to-back. Interacts with the co-chaperonin GroES.

Its subcellular location is the cytoplasm. It carries out the reaction ATP + H2O + a folded polypeptide = ADP + phosphate + an unfolded polypeptide.. Together with its co-chaperonin GroES, plays an essential role in assisting protein folding. The GroEL-GroES system forms a nano-cage that allows encapsulation of the non-native substrate proteins and provides a physical environment optimized to promote and accelerate protein folding. This Shewanella baltica (strain OS155 / ATCC BAA-1091) protein is Chaperonin GroEL.